We begin with the raw amino-acid sequence, 728 residues long: Protein Hook homolog 1 (728 aa).

Methionine 1 is modified (N-acetylmethionine). The interval 1-555 (MEETQPPPQP…LKQKLEAHME (555 aa)) is sufficient for interaction with microtubules. Positions 12–128 (LPLCDSLMIW…RLLQLILGCA (117 aa)) constitute a Calponin-homology (CH) domain. 2 coiled-coil regions span residues 169–434 (PNDA…RCSQ) and 477–658 (LRLQ…AKFR). Positions 169-444 (PNDAVGELEQ…VQQDHLNQTD (276 aa)) are sufficient for homodimerization, interaction wit HOOK2, HOOK3 and AP4M1. Serine 235 carries the post-translational modification Phosphoserine. The disordered stretch occupies residues 481-512 (QEGSENERIEELQEQLEQKHRKMNELETEQRL). Residues 503-512 (MNELETEQRL) are compositionally biased toward basic and acidic residues. The tract at residues 657-728 (FRDYEEKLIV…SVKVPATTSD (72 aa)) is sufficient for interaction with AKTIP and VPS18. At threonine 699 the chain carries Phosphothreonine. 2 positions are modified to phosphoserine: serine 719 and serine 727.

Belongs to the hook family. In terms of assembly, self-associates. Component of the FTS/Hook/FHIP complex (FHF complex), composed of AKTIP/FTS, FHIP1B, and one or more members of the Hook family of proteins HOOK1, HOOK2, and HOOK3. Interacts directly with AKTIP/FTS, HOOK2 and HOOK3. Associates with several subunits of the homotypic vesicular sorting complex (the HOPS complex) including VPS16, VPS18, VPS39 and VPS41; these interactions may be indirect. Interacts with CCDC181. Interacts (via coiled-coil region) with RIMBP3 (via C-terminus). Interacts with LRGUK (via guanylate kinase-like domain). Interacts with microtubules. May interact with CLN3. Interacts with AP4M1; the interaction is direct, mediates the interaction between FTS-Hook-FHIP (FHF) complex and AP-4 and the perinuclear distribution of AP-4.

The protein resides in the cytoplasm. Its subcellular location is the cytoskeleton. In terms of biological role, component of the FTS/Hook/FHIP complex (FHF complex). The FHF complex may function to promote vesicle trafficking and/or fusion via the homotypic vesicular protein sorting complex (the HOPS complex). FHF complex promotes the distribution of AP-4 complex to the perinuclear area of the cell. Required for spermatid differentiation. Probably involved in the positioning of the microtubules of the manchette and the flagellum in relation to the membrane skeleton. This is Protein Hook homolog 1 from Homo sapiens (Human).